The chain runs to 798 residues: Nuclear intron maturase 4, mitochondrial (798 aa).

The transit peptide at 1-16 (MFRKRNLVLDLLRRCY) directs the protein to the mitochondrion. The interval 578 to 665 (VVAPTNAIGR…AAKYRIHENE (88 aa)) is intron maturase type-2. The THAP-type zinc finger occupies 729–778 (CFVIGCSMAAPAVYTLHAMERQKFPGWKTGFSVCIPSSLNGRRIGLCKQH).

The protein belongs to the plant nuclear intron maturase (nMat) family.

Its subcellular location is the mitochondrion. It localises to the plastid. The protein localises to the chloroplast. Its function is as follows. Nuclear-encoded maturase required for splicing of group-II introns in mitochondria. Involved in NAD1 pre-mRNA processing and maturation of introns 1, 3 and 4. Necessary for mitochondrial biogenesis during early developmental stages. Essential for respiratory holocomplex I biogenesis in mitochondria. This is Nuclear intron maturase 4, mitochondrial from Arabidopsis thaliana (Mouse-ear cress).